A 214-amino-acid chain; its full sequence is Predicted GPI-anchored protein 57 (214 aa).

Residues 1-18 (MLFTQLIILFTFISQIIC) form the signal peptide. A disordered region spans residues 36–101 (RGSSGHSSGG…SSGSSSGSRN (66 aa)). Over residues 42 to 60 (SSGGGHSSSGSHSSGGGHS) the composition is skewed to gly residues. Residues 76–85 (SGSSSGSSSG) show a composition bias toward low complexity. A glycan (N-linked (GlcNAc...) asparagine) is linked at Asn182. Residue Gly191 is the site of GPI-anchor amidated glycine attachment. Positions 192 to 214 (VSLNIPSTHFYVIGLAAAYSIVL) are cleaved as a propeptide — removed in mature form.

It belongs to the PGA37 family.

Its subcellular location is the secreted. The protein localises to the cell membrane. Its function is as follows. Predicted GPI-anchored protein which may have a role during host infection. This chain is Predicted GPI-anchored protein 57 (PGA57), found in Candida albicans (strain SC5314 / ATCC MYA-2876) (Yeast).